Consider the following 466-residue polypeptide: 3-isopropylmalate dehydratase large subunit (466 aa).

[4Fe-4S] cluster contacts are provided by cysteine 347, cysteine 407, and cysteine 410.

The protein belongs to the aconitase/IPM isomerase family. LeuC type 1 subfamily. In terms of assembly, heterodimer of LeuC and LeuD. [4Fe-4S] cluster serves as cofactor.

It catalyses the reaction (2R,3S)-3-isopropylmalate = (2S)-2-isopropylmalate. It participates in amino-acid biosynthesis; L-leucine biosynthesis; L-leucine from 3-methyl-2-oxobutanoate: step 2/4. In terms of biological role, catalyzes the isomerization between 2-isopropylmalate and 3-isopropylmalate, via the formation of 2-isopropylmaleate. This Cronobacter sakazakii (strain ATCC BAA-894) (Enterobacter sakazakii) protein is 3-isopropylmalate dehydratase large subunit.